The following is a 251-amino-acid chain: Transcription initiation factor TFIID subunit 9B (251 aa).

The residue at position 1 (Met-1) is an N-acetylmethionine. Position 147 is a phosphoserine (Ser-147). 2 positions are modified to phosphothreonine: Thr-159 and Thr-174. Residue Ser-177 is modified to Phosphoserine. The disordered stretch occupies residues 229–251; the sequence is QNTANEANPLKRKHEDDDDNDIM.

Belongs to the TAF9 family. Binds TAF5 and TAF6. Component of TFIID and the TATA-binding protein-free TAF complex (TFTC). TFIID is composed of TATA binding protein (TBP) and a number of TBP-associated factors (TAFs). Binds N-terminal domain of p53/TP53 which is essential for transcription.

The protein localises to the nucleus. Functionally, essential for cell viability. TAF9 and TAF9B are involved in transcriptional activation as well as repression of distinct but overlapping sets of genes. May have a role in gene regulation associated with apoptosis. TAFs are components of the transcription factor IID (TFIID) complex, the TBP-free TAFII complex (TFTC), the PCAF histone acetylase complex and the STAGA transcription coactivator-HAT complex. TFIID or TFTC are essential for the regulation of RNA polymerase II-mediated transcription. The polypeptide is Transcription initiation factor TFIID subunit 9B (TAF9B) (Homo sapiens (Human)).